We begin with the raw amino-acid sequence, 257 residues long: UPF0246 protein Lcho_2652 (257 aa).

The protein belongs to the UPF0246 family.

This is UPF0246 protein Lcho_2652 from Leptothrix cholodnii (strain ATCC 51168 / LMG 8142 / SP-6) (Leptothrix discophora (strain SP-6)).